We begin with the raw amino-acid sequence, 375 residues long: V-type proton ATPase subunit C (375 aa).

It belongs to the V-ATPase C subunit family. In terms of assembly, V-ATPase is a heteromultimeric enzyme composed of a peripheral catalytic V1 complex (components A to H) attached to an integral membrane V0 proton pore complex (components: a, c, c'', d and e). Phosphorylated on Ser/Thr residues by WNK8.

Its subcellular location is the vacuole membrane. Functionally, subunit of the peripheral V1 complex of vacuolar ATPase. Subunit C is necessary for the assembly of the catalytic sector of the enzyme and is likely to have a specific function in its catalytic activity. V-ATPase is responsible for acidifying a variety of intracellular compartments in eukaryotic cells. The protein is V-type proton ATPase subunit C (VHA-C) of Arabidopsis thaliana (Mouse-ear cress).